We begin with the raw amino-acid sequence, 318 residues long: Beta-galactosidase small subunit (318 aa).

The protein belongs to the bacterial beta-galactosidase small subunit family. Heterodimer of a large (LacL) and a small subunit (LacM).

It catalyses the reaction Hydrolysis of terminal non-reducing beta-D-galactose residues in beta-D-galactosides.. Component of a beta-galactosidase. This Latilactobacillus sakei (Lactobacillus sakei) protein is Beta-galactosidase small subunit.